A 217-amino-acid polypeptide reads, in one-letter code: Small ribosomal subunit protein uS3 (217 aa).

In terms of domain architecture, KH type-2 spans Ile38–Lys106.

It belongs to the universal ribosomal protein uS3 family. As to quaternary structure, part of the 30S ribosomal subunit. Forms a tight complex with proteins S10 and S14.

Functionally, binds the lower part of the 30S subunit head. Binds mRNA in the 70S ribosome, positioning it for translation. The sequence is that of Small ribosomal subunit protein uS3 (rpsC) from Staphylococcus aureus (strain COL).